Here is a 277-residue protein sequence, read N- to C-terminus: 4-hydroxy-3-methylbut-2-enyl diphosphate reductase (277 aa).

Position 12 (Cys12) interacts with [4Fe-4S] cluster. The (2E)-4-hydroxy-3-methylbut-2-enyl diphosphate site is built by His36 and His70. The dimethylallyl diphosphate site is built by His36 and His70. Isopentenyl diphosphate is bound by residues His36 and His70. Cys92 is a binding site for [4Fe-4S] cluster. (2E)-4-hydroxy-3-methylbut-2-enyl diphosphate is bound at residue His120. Residue His120 coordinates dimethylallyl diphosphate. His120 is a binding site for isopentenyl diphosphate. Catalysis depends on Glu122, which acts as the Proton donor. Residue Thr160 participates in (2E)-4-hydroxy-3-methylbut-2-enyl diphosphate binding. Cys188 serves as a coordination point for [4Fe-4S] cluster. Residues Ser216, Ser217, Asn218, and Ser260 each contribute to the (2E)-4-hydroxy-3-methylbut-2-enyl diphosphate site. 4 residues coordinate dimethylallyl diphosphate: Ser216, Ser217, Asn218, and Ser260. The isopentenyl diphosphate site is built by Ser216, Ser217, Asn218, and Ser260.

Belongs to the IspH family. The cofactor is [4Fe-4S] cluster.

It catalyses the reaction isopentenyl diphosphate + 2 oxidized [2Fe-2S]-[ferredoxin] + H2O = (2E)-4-hydroxy-3-methylbut-2-enyl diphosphate + 2 reduced [2Fe-2S]-[ferredoxin] + 2 H(+). The enzyme catalyses dimethylallyl diphosphate + 2 oxidized [2Fe-2S]-[ferredoxin] + H2O = (2E)-4-hydroxy-3-methylbut-2-enyl diphosphate + 2 reduced [2Fe-2S]-[ferredoxin] + 2 H(+). It functions in the pathway isoprenoid biosynthesis; dimethylallyl diphosphate biosynthesis; dimethylallyl diphosphate from (2E)-4-hydroxy-3-methylbutenyl diphosphate: step 1/1. It participates in isoprenoid biosynthesis; isopentenyl diphosphate biosynthesis via DXP pathway; isopentenyl diphosphate from 1-deoxy-D-xylulose 5-phosphate: step 6/6. In terms of biological role, catalyzes the conversion of 1-hydroxy-2-methyl-2-(E)-butenyl 4-diphosphate (HMBPP) into a mixture of isopentenyl diphosphate (IPP) and dimethylallyl diphosphate (DMAPP). Acts in the terminal step of the DOXP/MEP pathway for isoprenoid precursor biosynthesis. The polypeptide is 4-hydroxy-3-methylbut-2-enyl diphosphate reductase (Sulfurovum sp. (strain NBC37-1)).